The sequence spans 403 residues: Tryptophan synthase beta chain (403 aa).

At Lys-87 the chain carries N6-(pyridoxal phosphate)lysine.

This sequence belongs to the TrpB family. Tetramer of two alpha and two beta chains. Pyridoxal 5'-phosphate serves as cofactor.

The enzyme catalyses (1S,2R)-1-C-(indol-3-yl)glycerol 3-phosphate + L-serine = D-glyceraldehyde 3-phosphate + L-tryptophan + H2O. It participates in amino-acid biosynthesis; L-tryptophan biosynthesis; L-tryptophan from chorismate: step 5/5. In terms of biological role, the beta subunit is responsible for the synthesis of L-tryptophan from indole and L-serine. The protein is Tryptophan synthase beta chain of Shewanella loihica (strain ATCC BAA-1088 / PV-4).